We begin with the raw amino-acid sequence, 478 residues long: Serine/threonine-protein phosphatase 2A activator 1 (478 aa).

The interval 359–478 is disordered; that stretch reads DPSAIPPPSR…DITTKAPWAK (120 aa). Residues 396–419 show a composition bias toward low complexity; that stretch reads APWATASQSTPPPSTGTAAPWATS.

This sequence belongs to the PTPA-type PPIase family.

Its subcellular location is the cytoplasm. The protein localises to the nucleus. The enzyme catalyses [protein]-peptidylproline (omega=180) = [protein]-peptidylproline (omega=0). Functionally, PPIases accelerate the folding of proteins. It catalyzes the cis-trans isomerization of proline imidic peptide bonds in oligopeptides. Acts as a regulatory subunit for PP2A-like phosphatases modulating their activity or substrate specificity, probably by inducing a conformational change in the catalytic subunit, a direct target of the PPIase. Can reactivate inactive phosphatase PP2A-phosphatase methylesterase complexes (PP2Ai) in presence of ATP and Mg(2+) by dissociating the inactive form from the complex. This Aspergillus oryzae (strain ATCC 42149 / RIB 40) (Yellow koji mold) protein is Serine/threonine-protein phosphatase 2A activator 1 (rrd1).